The primary structure comprises 150 residues: MDSLDAEQLSALQKAFDSFDTDSKGFITPETVGVILRMMGVKISEKNLQEVISETDEDGSGELEFEEFVELAAKFLIEEDEEALKAELREAFRVYDRGGNGYITTDVLKEILRELDNRLTEEDLDSIIEEVDEDGSGTLDFNEFMQMMNG.

At M1 the chain carries N-acetylmethionine. 4 consecutive EF-hand domains span residues 7-42 (EQLSALQKAFDSFDTDSKGFITPETVGVILRMMGVK), 43-78 (ISEKNLQEVISETDEDGSGELEFEEFVELAAKFLIE), 83-118 (ALKAELREAFRVYDRGGNGYITTDVLKEILRELDNR), and 119-150 (LTEEDLDSIIEEVDEDGSGTLDFNEFMQMMNG). Residues D56, D58, S60, E62, and E67 each coordinate Ca(2+). D132, D134, S136, T138, and E143 together coordinate Ca(2+).

The protein belongs to the troponin C family.

Functionally, troponin is the central regulatory protein of striated muscle contraction. Tn consists of three components: Tn-I which is the inhibitor of actomyosin ATPase, Tn-T which contains the binding site for tropomyosin and Tn-C. The binding of calcium to Tn-C abolishes the inhibitory action of Tn on actin filaments. The chain is Troponin C, isoform 2B from Homarus americanus (American lobster).